The following is a 580-amino-acid chain: tRNA-guanine(15) transglycosylase (580 aa).

D91 functions as the Nucleophile in the catalytic mechanism. D126 and A192 together coordinate substrate. C275, C277, and C280 together coordinate Zn(2+). Positions 504–579 (RMRVVVDEDA…LAVKVRRGVE (76 aa)) constitute a PUA domain.

Belongs to the archaeosine tRNA-ribosyltransferase family. Zn(2+) is required as a cofactor.

The enzyme catalyses guanosine(15) in tRNA + 7-cyano-7-deazaguanine = 7-cyano-7-carbaguanosine(15) in tRNA + guanine. It participates in tRNA modification; archaeosine-tRNA biosynthesis. Exchanges the guanine residue with 7-cyano-7-deazaguanine (preQ0) at position 15 in the dihydrouridine loop (D-loop) of archaeal tRNAs. This is tRNA-guanine(15) transglycosylase from Thermococcus kodakarensis (strain ATCC BAA-918 / JCM 12380 / KOD1) (Pyrococcus kodakaraensis (strain KOD1)).